The sequence spans 208 residues: Glutathione S-transferase GstB (208 aa).

The GST N-terminal domain maps to M1–R83. Glutathione contacts are provided by residues N12, N39, V53, and E67 to S68. The region spanning S88 to S208 is the GST C-terminal domain.

Belongs to the GST superfamily.

It carries out the reaction RX + glutathione = an S-substituted glutathione + a halide anion + H(+). Conjugation of reduced glutathione to a wide number of exogenous and endogenous hydrophobic electrophiles. This Escherichia coli O6:H1 (strain CFT073 / ATCC 700928 / UPEC) protein is Glutathione S-transferase GstB (gstB).